The following is a 191-amino-acid chain: Large ribosomal subunit protein uL5 (191 aa).

It belongs to the universal ribosomal protein uL5 family. Part of the 50S ribosomal subunit; part of the 5S rRNA/L5/L18/L25 subcomplex. Contacts the 5S rRNA and the P site tRNA. Forms a bridge to the 30S subunit in the 70S ribosome.

This is one of the proteins that bind and probably mediate the attachment of the 5S RNA into the large ribosomal subunit, where it forms part of the central protuberance. In the 70S ribosome it contacts protein S13 of the 30S subunit (bridge B1b), connecting the 2 subunits; this bridge is implicated in subunit movement. Contacts the P site tRNA; the 5S rRNA and some of its associated proteins might help stabilize positioning of ribosome-bound tRNAs. The protein is Large ribosomal subunit protein uL5 of Thermobifida fusca (strain YX).